The chain runs to 594 residues: Cryptochrome-2 (594 aa).

Residues 21-150 form the Photolyase/cryptochrome alpha/beta domain; the sequence is ASSVHWFRKG…EVVTENSHTL (130 aa). A Glycyl lysine isopeptide (Lys-Gly) (interchain with G-Cter in ubiquitin) cross-link involves residue K29. A Phosphoserine modification is found at S89. Residues K125 and K241 each participate in a glycyl lysine isopeptide (Lys-Gly) (interchain with G-Cter in ubiquitin) cross-link. Position 265 is a phosphoserine; by MAPK (S265). S270 is an FAD binding site. The residue at position 298 (S298) is a Phosphoserine. Q307 contacts FAD. K347 is covalently cross-linked (Glycyl lysine isopeptide (Lys-Gly) (interchain with G-Cter in ubiquitin)). Residues H373 and 405–407 each bind FAD; that span reads DAD. Positions 389–488 are required for inhibition of CLOCK-BMAL1-mediated transcription; that stretch reads WVSWESGVRV…IIGVDYPRPI (100 aa). Glycyl lysine isopeptide (Lys-Gly) (interchain with G-Cter in ubiquitin) cross-links involve residues K474 and K503. Positions 532–594 are disordered; that stretch reads VAEPGSSQAG…PAQEPPSKDS (63 aa). Over residues 536 to 547 the composition is skewed to polar residues; that stretch reads GSSQAGSISNTG. Position 553 is a phosphoserine; by GSK3-beta (S553). Residue S557 is modified to Phosphoserine; by DYRK1A and MAPK.

The protein belongs to the DNA photolyase class-1 family. Component of the circadian core oscillator, which includes the CRY proteins, CLOCK or NPAS2, BMAL1 or BMAL2, CSNK1D and/or CSNK1E, TIMELESS, and the PER proteins. Interacts with TIMELESS. Interacts directly with PER1, PER2 and PER3; interaction with PER2 inhibits its ubiquitination and vice versa. Interacts with CLOCK-BMAL1. Interacts with CLOCK. Interacts with BMAL1. Interacts with NFIL3. Interacts with FBXL3 and FBXL21. FBXL3, PER2 and the cofactor FAD compete for overlapping binding sites. FBXL3 cannot bind CRY2 that interacts already with PER2 or that contains bound FAD. Interacts with PPP5C (via TPR repeats); the interaction down-regulates the PPP5C phosphatase activity on CSNK1E. Interacts with nuclear receptors AR and NR3C1/GR; the interaction is ligand dependent. Interacts with PRKDC and CIART. Interacts with DDB1, USP7 and TARDBP. Interacts with HNF4A and PPARA. Interacts with PPARD (via domain NR LBD) and NR1I2 (via domain NR LBD) in a ligand-dependent manner. Interacts with PPARG, NR1I3 and VDR in a ligand-dependent manner. The cofactor is FAD. (6R)-5,10-methylene-5,6,7,8-tetrahydrofolate serves as cofactor. Post-translationally, phosphorylation on Ser-265 by MAPK is important for the inhibition of CLOCK-BMAL1-mediated transcriptional activity. Phosphorylation by CSKNe requires interaction with PER1 or PER2. Phosphorylated in a circadian manner at Ser-553 and Ser-557 in the suprachiasmatic nucleus (SCN) and liver. Phosphorylation at Ser-557 by DYRK1A promotes subsequent phosphorylation at Ser-553 by GSK3-beta: the two-step phosphorylation at the neighboring Ser residues leads to its proteasomal degradation. In terms of processing, ubiquitinated by the SCF(FBXL3) and SCF(FBXL21) complexes, regulating the balance between degradation and stabilization. The SCF(FBXL3) complex is mainly nuclear and mediates ubiquitination and subsequent degradation of CRY2. In contrast, cytoplasmic SCF(FBXL21) complex-mediated ubiquitination leads to stabilize CRY2 and counteract the activity of the SCF(FBXL3) complex. The SCF(FBXL3) and SCF(FBXL21) complexes probably mediate ubiquitination at different Lys residues. The SCF(FBXL3) complex recognizes and binds CRY2 phosphorylated at Ser-553 and Ser-557. Ubiquitination may be inhibited by PER2. Deubiquitinated by USP7. Expressed in all tissues examined including heart, cerebellum, cerebral cortex, lung, liver, muscle, kidney and ovary. Highest levels in heart, liver and ovary. Highly expressed in the suprachiasmatic nucleus (SCN).

The protein resides in the cytoplasm. The protein localises to the nucleus. Transcriptional repressor which forms a core component of the circadian clock. The circadian clock, an internal time-keeping system, regulates various physiological processes through the generation of approximately 24 hour circadian rhythms in gene expression, which are translated into rhythms in metabolism and behavior. It is derived from the Latin roots 'circa' (about) and 'diem' (day) and acts as an important regulator of a wide array of physiological functions including metabolism, sleep, body temperature, blood pressure, endocrine, immune, cardiovascular, and renal function. Consists of two major components: the central clock, residing in the suprachiasmatic nucleus (SCN) of the brain, and the peripheral clocks that are present in nearly every tissue and organ system. Both the central and peripheral clocks can be reset by environmental cues, also known as Zeitgebers (German for 'timegivers'). The predominant Zeitgeber for the central clock is light, which is sensed by retina and signals directly to the SCN. The central clock entrains the peripheral clocks through neuronal and hormonal signals, body temperature and feeding-related cues, aligning all clocks with the external light/dark cycle. Circadian rhythms allow an organism to achieve temporal homeostasis with its environment at the molecular level by regulating gene expression to create a peak of protein expression once every 24 hours to control when a particular physiological process is most active with respect to the solar day. Transcription and translation of core clock components (CLOCK, NPAS2, BMAL1, BMAL2, PER1, PER2, PER3, CRY1 and CRY2) plays a critical role in rhythm generation, whereas delays imposed by post-translational modifications (PTMs) are important for determining the period (tau) of the rhythms (tau refers to the period of a rhythm and is the length, in time, of one complete cycle). A diurnal rhythm is synchronized with the day/night cycle, while the ultradian and infradian rhythms have a period shorter and longer than 24 hours, respectively. Disruptions in the circadian rhythms contribute to the pathology of cardiovascular diseases, cancer, metabolic syndromes and aging. A transcription/translation feedback loop (TTFL) forms the core of the molecular circadian clock mechanism. Transcription factors, CLOCK or NPAS2 and BMAL1 or BMAL2, form the positive limb of the feedback loop, act in the form of a heterodimer and activate the transcription of core clock genes and clock-controlled genes (involved in key metabolic processes), harboring E-box elements (5'-CACGTG-3') within their promoters. The core clock genes: PER1/2/3 and CRY1/2 which are transcriptional repressors form the negative limb of the feedback loop and interact with the CLOCK|NPAS2-BMAL1|BMAL2 heterodimer inhibiting its activity and thereby negatively regulating their own expression. This heterodimer also activates nuclear receptors NR1D1/2 and RORA/B/G, which form a second feedback loop and which activate and repress BMAL1 transcription, respectively. CRY1 and CRY2 have redundant functions but also differential and selective contributions at least in defining the pace of the SCN circadian clock and its circadian transcriptional outputs. Less potent transcriptional repressor in cerebellum and liver than CRY1, though less effective in lengthening the period of the SCN oscillator. Seems to play a critical role in tuning SCN circadian period by opposing the action of CRY1. With CRY1, dispensable for circadian rhythm generation but necessary for the development of intercellular networks for rhythm synchrony. May mediate circadian regulation of cAMP signaling and gluconeogenesis by blocking glucagon-mediated increases in intracellular cAMP concentrations and in CREB1 phosphorylation. Besides its role in the maintenance of the circadian clock, is also involved in the regulation of other processes. Plays a key role in glucose and lipid metabolism modulation, in part, through the transcriptional regulation of genes involved in these pathways, such as LEP or ACSL4. Represses glucocorticoid receptor NR3C1/GR-induced transcriptional activity by binding to glucocorticoid response elements (GREs). Represses the CLOCK-BMAL1 induced transcription of BHLHE40/DEC1 and NAMPT. Represses PPARD and its target genes in the skeletal muscle and limits exercise capacity. Represses the transcriptional activity of NR1I2. The protein is Cryptochrome-2 (Cry2) of Rattus norvegicus (Rat).